The sequence spans 257 residues: Acetylglutamate kinase (257 aa).

Substrate-binding positions include 43-44, Arg-65, and Asn-157; that span reads GG.

This sequence belongs to the acetylglutamate kinase family. ArgB subfamily.

Its subcellular location is the cytoplasm. The catalysed reaction is N-acetyl-L-glutamate + ATP = N-acetyl-L-glutamyl 5-phosphate + ADP. Its pathway is amino-acid biosynthesis; L-arginine biosynthesis; N(2)-acetyl-L-ornithine from L-glutamate: step 2/4. Functionally, catalyzes the ATP-dependent phosphorylation of N-acetyl-L-glutamate. The sequence is that of Acetylglutamate kinase from Pasteurella multocida (strain Pm70).